The chain runs to 290 residues: Chitinase 10 (290 aa).

The N-terminal stretch at 1–28 (MAKPTPAPRATPFLLAAVLSIVVVAASG) is a signal peptide. Disulfide bonds link Cys70-Cys132 and Cys144-Cys153. The active-site Proton donor is Glu114. 2 N-linked (GlcNAc...) asparagine glycosylation sites follow: Asn193 and Asn234. A disulfide bridge connects residues Cys252 and Cys284.

The protein belongs to the glycosyl hydrolase 19 family. Chitinase class I subfamily. As to expression, expressed at low levels in roots, leaves and meristems.

The enzyme catalyses Random endo-hydrolysis of N-acetyl-beta-D-glucosaminide (1-&gt;4)-beta-linkages in chitin and chitodextrins.. This is Chitinase 10 (Cht10) from Oryza sativa subsp. japonica (Rice).